A 285-amino-acid polypeptide reads, in one-letter code: Probable endonuclease 4 (285 aa).

Residues histidine 67, histidine 107, glutamate 144, aspartate 178, histidine 181, histidine 215, aspartate 228, histidine 230, and glutamate 260 each contribute to the Zn(2+) site.

Belongs to the AP endonuclease 2 family. The cofactor is Zn(2+).

It catalyses the reaction Endonucleolytic cleavage to 5'-phosphooligonucleotide end-products.. In terms of biological role, endonuclease IV plays a role in DNA repair. It cleaves phosphodiester bonds at apurinic or apyrimidinic (AP) sites, generating a 3'-hydroxyl group and a 5'-terminal sugar phosphate. This chain is Probable endonuclease 4, found in Chloroflexus aurantiacus (strain ATCC 29366 / DSM 635 / J-10-fl).